The sequence spans 358 residues: Src kinase-associated phosphoprotein 2 (358 aa).

A phosphoserine mark is found at S6 and S9. The disordered stretch occupies residues 60–108 (PQEFQDKGDAEEGDEYDDPFAGPPDTISLASERYDKDDDGPSDGNQFPP). At Y75 the chain carries Phosphotyrosine. S87 and S90 each carry phosphoserine. In terms of domain architecture, PH spans 116–219 (FVIKAGYLEK…WVQQLKFILQ (104 aa)). A phosphotyrosine mark is found at Y151 and Y197. S223 carries the post-translational modification Phosphoserine. The tract at residues 227–293 (PEDEDEKGDL…DSVQHPSGDK (67 aa)) is disordered. Positions 243–253 (PVPVSSPQRSQ) are enriched in low complexity. Residues 255 to 270 (IDDEIYEELPEEEEDT) are compositionally biased toward acidic residues. Position 260 is a phosphotyrosine (Y260). Residues S272, S282, and S285 each carry the phosphoserine modification. Positions 274-293 (KMDEQGKGSRDSVQHPSGDK) are enriched in basic and acidic residues. One can recognise an SH3 domain in the interval 296-357 (DYANFYQGLW…PKAYLMEMYD (62 aa)).

Belongs to the SKAP family. As to quaternary structure, interacts with FYB1, which is required for SKAP2 protein stability. Interacts with PTPNS1. Part of a complex consisting of SKAP2, FYB1 and PTPNS1. Part of a complex consisting of SKAP2, FYB1 and LILRB3. Interacts with LAT, GRB2, PTK2B, and PRAM1. May interact with actin. May interact with FYN, HCK and LYN. Interacts with FASLG.

Its subcellular location is the cytoplasm. May be involved in B-cell and macrophage adhesion processes. In B-cells, may act by coupling the B-cell receptor (BCR) to integrin activation. May play a role in src signaling pathway. The polypeptide is Src kinase-associated phosphoprotein 2 (Skap2) (Rattus norvegicus (Rat)).